The primary structure comprises 355 residues: Protein-glutamate methylesterase/protein-glutamine glutaminase (355 aa).

Residues 4–121 (KVLIIDDSAL…ANGMHEYSEM (118 aa)) form the Response regulatory domain. Aspartate 55 is subject to 4-aspartylphosphate. The region spanning 156–348 (LISSEKLIII…GRVLQYLAAN (193 aa)) is the CheB-type methylesterase domain. Catalysis depends on residues serine 168, histidine 194, and aspartate 290.

The protein belongs to the CheB family. Phosphorylated by CheA. Phosphorylation of the N-terminal regulatory domain activates the methylesterase activity.

It localises to the cytoplasm. The catalysed reaction is [protein]-L-glutamate 5-O-methyl ester + H2O = L-glutamyl-[protein] + methanol + H(+). It catalyses the reaction L-glutaminyl-[protein] + H2O = L-glutamyl-[protein] + NH4(+). Involved in chemotaxis. Part of a chemotaxis signal transduction system that modulates chemotaxis in response to various stimuli. Catalyzes the demethylation of specific methylglutamate residues introduced into the chemoreceptors (methyl-accepting chemotaxis proteins or MCP) by CheR. Also mediates the irreversible deamidation of specific glutamine residues to glutamic acid. This is Protein-glutamate methylesterase/protein-glutamine glutaminase from Methylobacillus flagellatus (strain ATCC 51484 / DSM 6875 / VKM B-1610 / KT).